Reading from the N-terminus, the 276-residue chain is uncharacterized protein (276 aa).

15 to 22 (GKGGVGKS) serves as a coordination point for ATP. 2 4Fe-4S ferredoxin-type domains span residues 68–96 (EIYEINDDCIRCGKCLDVCQFDAIGDFKI) and 92–121 (GDFKINPILCEGCGACELICEFDAIEPIKR). Residues Cys-76, Cys-79, Cys-82, Cys-86, Cys-101, Cys-104, Cys-107, and Cys-111 each contribute to the [4Fe-4S] cluster site.

This is an uncharacterized protein from Methanocaldococcus jannaschii (strain ATCC 43067 / DSM 2661 / JAL-1 / JCM 10045 / NBRC 100440) (Methanococcus jannaschii).